A 982-amino-acid chain; its full sequence is Glutamate [NMDA] receptor subunit 1 (982 aa).

A signal peptide spans M1–A22. The Extracellular segment spans residues Q23–S568. N253, N309, N340, N392, N449, N476, and N496 each carry an N-linked (GlcNAc...) asparagine glycan. Glycine is bound by residues P525 to T527 and R532. Residues N569 to L589 traverse the membrane as a helical segment. Topologically, residues D590 to W646 are cytoplasmic. Residues A647–L667 traverse the membrane as a helical segment. Residues E668–N826 are Extracellular-facing. N688 carries N-linked (GlcNAc...) asparagine glycosylation. S698 and D742 together coordinate glycine. The helical transmembrane segment at M827 to I847 threads the bilayer. The Cytoplasmic portion of the chain corresponds to E848–V982. The interval L948 to V982 is disordered. Residues G972–V982 are compositionally biased toward polar residues.

Belongs to the glutamate-gated ion channel (TC 1.A.10.1) family. As to quaternary structure, forms a heteromeric NMDA channel with Nmdar2.

The protein resides in the cell membrane. The protein localises to the postsynaptic cell membrane. It is found in the postsynaptic density. In terms of biological role, NMDA receptor subtype of glutamate-gated ion channels with high calcium permeability and voltage-dependent sensitivity to magnesium. Mediated by glycine. This protein plays a key role in synaptic plasticity, synaptogenesis, excitotoxicity, memory acquisition and learning. It mediates neuronal functions in glutamate neurotransmission. Is involved in the cell surface targeting of NMDA receptors. Plays a role in associative learning and in long-term memory consolidation. The sequence is that of Glutamate [NMDA] receptor subunit 1 from Drosophila grimshawi (Hawaiian fruit fly).